The following is a 559-amino-acid chain: Thrombospondin-related anonymous protein (559 aa).

A signal peptide spans 1–25 (MNHLGNVKYLVIVFLIFFDLFLVNG). Residues 26–496 (RDVQNNIVDE…KKGESDNKYK (471 aa)) are Extracellular-facing. One can recognise a VWFA domain in the interval 48-234 (DLYLLMDCSG…NVIGPFMKAV (187 aa)). Isoglutamyl lysine isopeptide (Gln-Lys) (interchain with K-? in Factor 3(A)) cross-links involve residues Gln-77 and Gln-78. A glycan (N-linked (GlcNAc...) asparagine) is linked at Asn-132. Positions 241 to 287 (TASCGVWDEWSPCSVTCGKGTRSRKREILHEGCTSEIQEQCEEERCP) constitute a TSP type-1 domain. 3 disulfides stabilise this stretch: Cys-244/Cys-273, Cys-253/Cys-281, and Cys-257/Cys-286. The tract at residues 280-496 (QCEEERCPPK…KKGESDNKYK (217 aa)) is disordered. A compositionally biased stretch (basic and acidic residues) spans 283–292 (EERCPPKWEP). Positions 307–309 (RGD) match the Cell attachment site motif. N-linked (GlcNAc...) asparagine glycosylation occurs at Asn-310. Positions 370 to 400 (KEVPSDVPKNPEDDREENFDIPKKPENKHDN) are enriched in basic and acidic residues. The span at 431–440 (DPQSQDNNGN) shows a compositional bias: polar residues. The span at 444 to 459 (PNSEDRETRPHGRNNE) shows a compositional bias: basic and acidic residues. An N-linked (GlcNAc...) asparagine glycan is attached at Asn-460. Over residues 466 to 495 (KYNDTPKHPEREEHEKPDNNKKKGESDNKY) the composition is skewed to basic and acidic residues. The chain crosses the membrane as a helical span at residues 497 to 515 (IAGGIAGGLALLACAGLAY). The Cytoplasmic portion of the chain corresponds to 516–559 (KFVVPGAATPYAGEPAPFDETLGEEDKDLDEPEQFRLPEENEWN). The interval 523–559 (ATPYAGEPAPFDETLGEEDKDLDEPEQFRLPEENEWN) is disordered. The segment covering 536–547 (TLGEEDKDLDEP) has biased composition (acidic residues). A compositionally biased stretch (basic and acidic residues) spans 548–559 (EQFRLPEENEWN).

The protein localises to the cell membrane. The sequence is that of Thrombospondin-related anonymous protein (TRAP) from Plasmodium falciparum.